Here is a 354-residue protein sequence, read N- to C-terminus: Ion-translocating oxidoreductase complex subunit D (354 aa).

Helical transmembrane passes span 19 to 39 (IMLL…YYFG), 40 to 60 (FGVL…EFLV), 77 to 99 (AAVT…LSFF), and 119 to 139 (IFNP…ILMT). An FMN phosphoryl threonine modification is found at T187. 5 consecutive transmembrane segments (helical) span residues 221–241 (WISI…FNVI), 245–265 (IPVS…YFFK), 268–288 (MYYP…FFIA), 295–315 (SITK…IWLI), and 319–339 (GNYP…VPLI).

The protein belongs to the NqrB/RnfD family. As to quaternary structure, the complex is composed of six subunits: RnfA, RnfB, RnfC, RnfD, RnfE and RnfG. FMN is required as a cofactor.

It is found in the cell inner membrane. Functionally, part of a membrane-bound complex that couples electron transfer with translocation of ions across the membrane. This chain is Ion-translocating oxidoreductase complex subunit D, found in Buchnera aphidicola subsp. Baizongia pistaciae (strain Bp).